We begin with the raw amino-acid sequence, 493 residues long: Cysteine--tRNA ligase (493 aa).

Residue C29 coordinates Zn(2+). The 'HIGH' region signature appears at 31–41; it reads PTVYDFAHIGN. Positions 227, 252, and 256 each coordinate Zn(2+). The short motif at 285 to 289 is the 'KMSKS' region element; the sequence is KMSKS. Position 288 (K288) interacts with ATP.

The protein belongs to the class-I aminoacyl-tRNA synthetase family. As to quaternary structure, monomer. Zn(2+) serves as cofactor.

The protein localises to the cytoplasm. It carries out the reaction tRNA(Cys) + L-cysteine + ATP = L-cysteinyl-tRNA(Cys) + AMP + diphosphate. The sequence is that of Cysteine--tRNA ligase from Rhodopseudomonas palustris (strain HaA2).